The following is an 859-amino-acid chain: Leucine--tRNA ligase (859 aa).

A 'HIGH' region motif is present at residues 42-52 (PYPSGRLHMGH). The short motif at 618–622 (KMSKS) is the 'KMSKS' region element. Residue Lys-621 participates in ATP binding.

The protein belongs to the class-I aminoacyl-tRNA synthetase family.

The protein localises to the cytoplasm. It catalyses the reaction tRNA(Leu) + L-leucine + ATP = L-leucyl-tRNA(Leu) + AMP + diphosphate. The sequence is that of Leucine--tRNA ligase from Shewanella baltica (strain OS195).